The chain runs to 364 residues: DNA polymerase IV (364 aa).

The UmuC domain occupies 14–198 (IIHIDMDAFF…LPIEKFHGVG (185 aa)). 2 residues coordinate Mg(2+): aspartate 18 and aspartate 116. Glutamate 117 is a catalytic residue.

It belongs to the DNA polymerase type-Y family. In terms of assembly, monomer. Mg(2+) serves as cofactor.

It is found in the cytoplasm. The catalysed reaction is DNA(n) + a 2'-deoxyribonucleoside 5'-triphosphate = DNA(n+1) + diphosphate. In terms of biological role, poorly processive, error-prone DNA polymerase involved in untargeted mutagenesis. Copies undamaged DNA at stalled replication forks, which arise in vivo from mismatched or misaligned primer ends. These misaligned primers can be extended by PolIV. Exhibits no 3'-5' exonuclease (proofreading) activity. May be involved in translesional synthesis, in conjunction with the beta clamp from PolIII. This is DNA polymerase IV from Streptococcus agalactiae serotype Ia (strain ATCC 27591 / A909 / CDC SS700).